Reading from the N-terminus, the 424-residue chain is Histidine--tRNA ligase (424 aa).

This sequence belongs to the class-II aminoacyl-tRNA synthetase family. In terms of assembly, homodimer.

The protein resides in the cytoplasm. It catalyses the reaction tRNA(His) + L-histidine + ATP = L-histidyl-tRNA(His) + AMP + diphosphate + H(+). The polypeptide is Histidine--tRNA ligase (Salmonella heidelberg (strain SL476)).